Here is a 371-residue protein sequence, read N- to C-terminus: Chaperone protein DnaJ (371 aa).

The 66-residue stretch at Ser-5–Gly-70 folds into the J domain. The CR-type zinc-finger motif lies at Gly-139–Arg-217. Residues Cys-152, Cys-155, Cys-169, Cys-172, Cys-191, Cys-194, Cys-205, and Cys-208 each contribute to the Zn(2+) site. 4 CXXCXGXG motif repeats span residues Cys-152 to Gly-159, Cys-169 to Gly-176, Cys-191 to Gly-198, and Cys-205 to Gly-212.

This sequence belongs to the DnaJ family. Homodimer. Requires Zn(2+) as cofactor.

It localises to the cytoplasm. In terms of biological role, participates actively in the response to hyperosmotic and heat shock by preventing the aggregation of stress-denatured proteins and by disaggregating proteins, also in an autonomous, DnaK-independent fashion. Unfolded proteins bind initially to DnaJ; upon interaction with the DnaJ-bound protein, DnaK hydrolyzes its bound ATP, resulting in the formation of a stable complex. GrpE releases ADP from DnaK; ATP binding to DnaK triggers the release of the substrate protein, thus completing the reaction cycle. Several rounds of ATP-dependent interactions between DnaJ, DnaK and GrpE are required for fully efficient folding. Also involved, together with DnaK and GrpE, in the DNA replication of plasmids through activation of initiation proteins. This is Chaperone protein DnaJ from Leptospira borgpetersenii serovar Hardjo-bovis (strain JB197).